Reading from the N-terminus, the 123-residue chain is Small ribosomal subunit protein uS12cz/uS12cy (123 aa).

Belongs to the universal ribosomal protein uS12 family. In terms of assembly, part of the 30S ribosomal subunit.

It localises to the plastid. The protein localises to the chloroplast. Its function is as follows. With S4 and S5 plays an important role in translational accuracy. Located at the interface of the 30S and 50S subunits. The protein is Small ribosomal subunit protein uS12cz/uS12cy (rps12-A) of Glycine max (Soybean).